Reading from the N-terminus, the 367-residue chain is Outer membrane porin C (367 aa).

Residues 1 to 21 (MKVKVLSLLVPALLVAGAANA) form the signal peptide. The Periplasmic portion of the chain corresponds to 22-33 (AEVYNKDGNKLD). A beta stranded transmembrane segment spans residues 34–42 (LYGKVDGLH). The Extracellular segment spans residues 43-53 (YFSDNKDVDGD). Residues 54-63 (QTYMRLGFKG) form a beta stranded membrane-spanning segment. The Periplasmic portion of the chain corresponds to 64-73 (ETQVTDQLTG). The chain crosses the membrane as a beta stranded span at residues 74 to 84 (YGQWEYQIQGN). At 85–91 (SAENENN) the chain is on the extracellular side. Residues 92–101 (SWTRVAFAGL) traverse the membrane as a beta stranded segment. Topologically, residues 102–106 (KFQDV) are periplasmic. A beta stranded membrane pass occupies residues 107–115 (GSFDYGRNY). Residues 116–133 (GVVYDVTSWTDVLPEFGG) form a loop L3; may constrict the pore region. Over 116-141 (GVVYDVTSWTDVLPEFGGDTYGSDNF) the chain is Extracellular. The chain crosses the membrane as a beta stranded span at residues 142–154 (MQQRGNGFATYRN). At 155–163 (TDFFGLVDG) the chain is on the periplasmic side. The chain crosses the membrane as a beta stranded span at residues 164–171 (LNFAVQYQ). The Extracellular portion of the chain corresponds to 172-200 (GKNGNPSGEGFTSGVTNNGRDALRQNGDG). Residues 201–207 (VGGSITY) form a beta stranded membrane-spanning segment. At 208-211 (DYEG) the chain is on the periplasmic side. The beta stranded transmembrane segment at 212 to 219 (FGIGGAIS) threads the bilayer. Topologically, residues 220–241 (SSKRTDAQNTAAYIGNGDRAET) are extracellular. The chain crosses the membrane as a beta stranded span at residues 242–248 (YTGGLKY). Residues 249 to 252 (DANN) are Periplasmic-facing. The beta stranded transmembrane segment at 253 to 260 (IYLAAQYT) threads the bilayer. Topologically, residues 261-269 (QTYNATRVG) are extracellular. A beta stranded membrane pass occupies residues 270–286 (SLGWANKAQNFEAVAQY). Residues 287–291 (QFDFG) lie on the Periplasmic side of the membrane. Residues 292-299 (LRPSLAYL) form a beta stranded membrane-spanning segment. Over 300–318 (QSKGKNLGRGYDDEDILKY) the chain is Extracellular. Residues 319–326 (VDVGATYY) traverse the membrane as a beta stranded segment. Over 327–330 (FNKN) the chain is Periplasmic. A beta stranded transmembrane segment spans residues 331–338 (MSTYVDYK). Over 339–358 (INLLDDNQFTRDAGINTDNI) the chain is Extracellular. Mg(2+)-binding residues include asparagine 340, leucine 342, and threonine 355. The beta stranded transmembrane segment at 359–366 (VALGLVYQ) threads the bilayer. A topological domain (periplasmic) is located at residue phenylalanine 367.

Belongs to the Gram-negative porin family. In terms of assembly, homotrimer. Forms mixed heterotrimers with OmpF and with PhoE; other mixed heterotrimers are also probable.

Its subcellular location is the cell outer membrane. Forms pores that allow passive diffusion of small molecules across the outer membrane. Functionally, (Microbial infection) Supports colicin E5 entry in the absence of its major receptor OmpF. Its function is as follows. (Microbial infection) A mixed OmpC-OmpF heterotrimer is the outer membrane receptor for toxin CdiA-EC536; polymorphisms in extracellular loops 4 and 5 of OmpC confer susceptibility to CdiA-EC536-mediated toxicity. This is Outer membrane porin C (ompC) from Escherichia coli (strain K12).